The chain runs to 335 residues: Tetraacyldisaccharide 4'-kinase (335 aa).

59-66 lines the ATP pocket; sequence TAGGNGKT.

It belongs to the LpxK family.

The enzyme catalyses a lipid A disaccharide + ATP = a lipid IVA + ADP + H(+). It participates in glycolipid biosynthesis; lipid IV(A) biosynthesis; lipid IV(A) from (3R)-3-hydroxytetradecanoyl-[acyl-carrier-protein] and UDP-N-acetyl-alpha-D-glucosamine: step 6/6. In terms of biological role, transfers the gamma-phosphate of ATP to the 4'-position of a tetraacyldisaccharide 1-phosphate intermediate (termed DS-1-P) to form tetraacyldisaccharide 1,4'-bis-phosphate (lipid IVA). This chain is Tetraacyldisaccharide 4'-kinase, found in Vibrio vulnificus (strain YJ016).